The following is a 217-amino-acid chain: GrpE protein homolog 1, mitochondrial (217 aa).

Residues 1 to 27 (MAAQCVRLARRSLPALALSLRPSPRLL) constitute a mitochondrion transit peptide. The interval 29 to 56 (TATKQKNSGQNLEEDMGQSEQKADPPAT) is disordered. Over residues 30-39 (ATKQKNSGQN) the composition is skewed to polar residues. Position 94 is an N6-acetyllysine; alternate (Lys94). At Lys94 the chain carries N6-succinyllysine; alternate. Lys100 is subject to N6-acetyllysine. The residue at position 120 (Lys120) is an N6-succinyllysine. Lys215 carries the N6-acetyllysine; alternate modification. Lys215 carries the N6-succinyllysine; alternate modification.

The protein belongs to the GrpE family. In terms of assembly, probable component of the PAM complex at least composed of a mitochondrial HSP70 protein, GRPEL1 or GRPEL2, TIMM44, TIMM16/PAM16 and TIMM14/DNAJC19. Binds to HSP70, HSC70 and HSJ1B.

It is found in the mitochondrion matrix. In terms of biological role, essential component of the PAM complex, a complex required for the translocation of transit peptide-containing proteins from the inner membrane into the mitochondrial matrix in an ATP-dependent manner. Seems to control the nucleotide-dependent binding of mitochondrial HSP70 to substrate proteins. The polypeptide is GrpE protein homolog 1, mitochondrial (GRPEL1) (Homo sapiens (Human)).